Consider the following 273-residue polypeptide: Dermonecrotic toxin LdSicTox-alphaIB3aiv (273 aa).

Residue His5 is part of the active site. Mg(2+) is bound by residues Glu25 and Asp27. Residue His41 is the Nucleophile of the active site. Intrachain disulfides connect Cys45/Cys51 and Cys47/Cys190. Asp85 is a Mg(2+) binding site.

It belongs to the arthropod phospholipase D family. Class II subfamily. Mg(2+) is required as a cofactor. As to expression, expressed by the venom gland.

It is found in the secreted. The catalysed reaction is an N-(acyl)-sphingosylphosphocholine = an N-(acyl)-sphingosyl-1,3-cyclic phosphate + choline. It carries out the reaction an N-(acyl)-sphingosylphosphoethanolamine = an N-(acyl)-sphingosyl-1,3-cyclic phosphate + ethanolamine. The enzyme catalyses a 1-acyl-sn-glycero-3-phosphocholine = a 1-acyl-sn-glycero-2,3-cyclic phosphate + choline. It catalyses the reaction a 1-acyl-sn-glycero-3-phosphoethanolamine = a 1-acyl-sn-glycero-2,3-cyclic phosphate + ethanolamine. Functionally, dermonecrotic toxins cleave the phosphodiester linkage between the phosphate and headgroup of certain phospholipids (sphingolipid and lysolipid substrates), forming an alcohol (often choline) and a cyclic phosphate. This toxin acts on sphingomyelin (SM). It may also act on ceramide phosphoethanolamine (CPE), lysophosphatidylcholine (LPC) and lysophosphatidylethanolamine (LPE), but not on lysophosphatidylserine (LPS), and lysophosphatidylglycerol (LPG). It acts by transphosphatidylation, releasing exclusively cyclic phosphate products as second products. Induces dermonecrosis, hemolysis, increased vascular permeability, edema, inflammatory response, and platelet aggregation. This chain is Dermonecrotic toxin LdSicTox-alphaIB3aiv, found in Loxosceles deserta (Desert recluse spider).